A 69-amino-acid chain; its full sequence is Large ribosomal subunit protein bL28 (69 aa).

The protein belongs to the bacterial ribosomal protein bL28 family.

The sequence is that of Large ribosomal subunit protein bL28 from Nitratidesulfovibrio vulgaris (strain DSM 19637 / Miyazaki F) (Desulfovibrio vulgaris).